The sequence spans 150 residues: Transcriptional regulator MraZ (150 aa).

SpoVT-AbrB domains are found at residues 6–52 (EFFN…PYQE) and 80–126 (AVEC…NRTK).

The protein belongs to the MraZ family. As to quaternary structure, forms oligomers.

The protein resides in the cytoplasm. It localises to the nucleoid. This chain is Transcriptional regulator MraZ, found in Syntrophotalea carbinolica (strain DSM 2380 / NBRC 103641 / GraBd1) (Pelobacter carbinolicus).